A 228-amino-acid polypeptide reads, in one-letter code: UPF0758 protein CLB_3028 (228 aa).

Residues 106–228 (KISTPLDVSN…YVSMKEKGTI (123 aa)) form the MPN domain. 3 residues coordinate Zn(2+): His177, His179, and Asp190. Positions 177–190 (HNHPSGDPTPSKED) match the JAMM motif motif.

The protein belongs to the UPF0758 family.

The chain is UPF0758 protein CLB_3028 from Clostridium botulinum (strain ATCC 19397 / Type A).